The following is a 297-amino-acid chain: B-lymphocyte antigen CD20 (297 aa).

At 1–51 the chain is on the cytoplasmic side; sequence MTTPRNSMSGTLPVDPMKSPTAMYPVQKIIPKRMPSVVGPTQNFFMRESKT. Serine 36 is subject to Phosphoserine. The chain crosses the membrane as a helical span at residues 52-72; it reads LGAVQIMNGLFHIALGSLLMI. Over 73–75 the chain is Extracellular; sequence HTD. The helical transmembrane segment at 76–96 threads the bilayer; that stretch reads VCAPICITMWYPLWGGIMFII. Residues 97–122 are Cytoplasmic-facing; it reads SGSLLAAADKNPRKSLVKGKMIMNSL. The chain crosses the membrane as a helical span at residues 123–143; it reads SLFAAISGIIFLIMDIFNITI. Topologically, residues 144–188 are extracellular; sequence SHFFKMENLNLIKAPMPYVDIHNCDPANPSEKNSLSIQYCGSIRS. Residues 189–209 form a helical membrane-spanning segment; the sequence is VFLGVFAVMLIFAFFQKLVTA. Residues 210 to 297 lie on the Cytoplasmic side of the membrane; that stretch reads GIVENEWKKL…SSPIENDSIP (88 aa). Residue cysteine 220 is the site of S-palmitoyl cysteine attachment. Position 225 is a phosphoserine (serine 225). Positions 274-297 are disordered; the sequence is ELEINFAEPPQEQESSPIENDSIP. The segment covering 281 to 290 has biased composition (low complexity); the sequence is EPPQEQESSP.

The protein belongs to the MS4A family. Forms homotetramers. Interacts with the heavy and light chains of cell surface IgM, the antigen-binding components of the BCR. In terms of processing, phosphorylated. Might be functionally regulated by protein kinase(s). Expressed in PBMCs and lymph node from healthy dogs, in B-cells of canine lymphoma, but not in T-cell lymphoma cells and non-T and non-B-cell lymphoma cells.

Its subcellular location is the cell membrane. B-lymphocyte-specific membrane protein that plays a role in the regulation of cellular calcium influx necessary for the development, differentiation, and activation of B-lymphocytes. Functions as a store-operated calcium (SOC) channel component promoting calcium influx after activation by the B-cell receptor/BCR. This is B-lymphocyte antigen CD20 (MS4A1) from Canis lupus familiaris (Dog).